The chain runs to 957 residues: Melanoma-associated antigen E1 (957 aa).

The disordered stretch occupies residues 1-433 (MSLVSQNSRR…RNPSKCSIVL (433 aa)). Composition is skewed to polar residues over residues 85-96 (SEASSASGQPTV) and 104-130 (LLAT…SVTL). Residues 138 to 156 (TSRPPTSSEEPSTSVPATP) are compositionally biased toward low complexity. 6 stretches are compositionally biased toward polar residues: residues 158-177 (EGTS…TSVV), 220-232 (LSTS…TEGL), 256-306 (RSTT…GPST), 328-344 (LSTS…STSV), 364-380 (RSTS…DTSV), and 414-428 (TLFS…NPSK). 2 consecutive MAGE domains span residues 491–690 (MEQN…YNEA) and 745–936 (LESK…YREA). Positions 743–957 (SRLESKARKL…HRQFFVHNFR (215 aa)) are interaction with DTNA.

Interacts with DTNA. Interacts with TRIM28.

The protein localises to the cytoplasm. It localises to the perinuclear region. The protein resides in the nucleus. Its subcellular location is the cell membrane. In terms of biological role, may enhance ubiquitin ligase activity of RING-type zinc finger-containing E3 ubiquitin-protein ligases. Proposed to act through recruitment and/or stabilization of the Ubl-conjugating enzyme (E2) at the E3:substrate complex. In Macaca fascicularis (Crab-eating macaque), this protein is Melanoma-associated antigen E1 (MAGEE1).